We begin with the raw amino-acid sequence, 200 residues long: Imidazole glycerol phosphate synthase subunit HisH (200 aa).

One can recognise a Glutamine amidotransferase type-1 domain in the interval Asp-3–Pro-200. The Nucleophile role is filled by Cys-78. Active-site residues include His-179 and Glu-181.

Heterodimer of HisH and HisF.

The protein resides in the cytoplasm. It catalyses the reaction 5-[(5-phospho-1-deoxy-D-ribulos-1-ylimino)methylamino]-1-(5-phospho-beta-D-ribosyl)imidazole-4-carboxamide + L-glutamine = D-erythro-1-(imidazol-4-yl)glycerol 3-phosphate + 5-amino-1-(5-phospho-beta-D-ribosyl)imidazole-4-carboxamide + L-glutamate + H(+). The catalysed reaction is L-glutamine + H2O = L-glutamate + NH4(+). It participates in amino-acid biosynthesis; L-histidine biosynthesis; L-histidine from 5-phospho-alpha-D-ribose 1-diphosphate: step 5/9. In terms of biological role, IGPS catalyzes the conversion of PRFAR and glutamine to IGP, AICAR and glutamate. The HisH subunit catalyzes the hydrolysis of glutamine to glutamate and ammonia as part of the synthesis of IGP and AICAR. The resulting ammonia molecule is channeled to the active site of HisF. The polypeptide is Imidazole glycerol phosphate synthase subunit HisH (Xanthomonas euvesicatoria pv. vesicatoria (strain 85-10) (Xanthomonas campestris pv. vesicatoria)).